A 68-amino-acid polypeptide reads, in one-letter code: Negative regulator of P-body association (68 aa).

Residues 1 to 68 (MGDQPCASGR…LKSHPPPPEK (68 aa)) form a disordered region.

As to quaternary structure, interacts with mRNA decapping proteins DCP1A, DCP2 and EDC4.

It localises to the cytoplasm. The protein resides in the P-body. Functionally, promotes dispersal of P-body components and is likely to play a role in the mRNA decapping process. This is Negative regulator of P-body association from Homo sapiens (Human).